Consider the following 257-residue polypeptide: Tryptophan synthase alpha chain (257 aa).

Active-site proton acceptor residues include Glu-47 and Asp-58.

Belongs to the TrpA family. As to quaternary structure, tetramer of two alpha and two beta chains.

It catalyses the reaction (1S,2R)-1-C-(indol-3-yl)glycerol 3-phosphate + L-serine = D-glyceraldehyde 3-phosphate + L-tryptophan + H2O. Its pathway is amino-acid biosynthesis; L-tryptophan biosynthesis; L-tryptophan from chorismate: step 5/5. Its function is as follows. The alpha subunit is responsible for the aldol cleavage of indoleglycerol phosphate to indole and glyceraldehyde 3-phosphate. The chain is Tryptophan synthase alpha chain from Listeria innocua serovar 6a (strain ATCC BAA-680 / CLIP 11262).